Consider the following 339-residue polypeptide: Fructose-1,6-bisphosphatase class 1 (339 aa).

Residues Glu-91, Asp-113, Leu-115, and Asp-116 each coordinate Mg(2+). Residues 116 to 119, Asn-210, and Lys-276 contribute to the substrate site; that span reads DGSS. Glu-282 serves as a coordination point for Mg(2+).

This sequence belongs to the FBPase class 1 family. Homotetramer. The cofactor is Mg(2+).

It is found in the cytoplasm. The catalysed reaction is beta-D-fructose 1,6-bisphosphate + H2O = beta-D-fructose 6-phosphate + phosphate. The protein operates within carbohydrate biosynthesis; gluconeogenesis. The chain is Fructose-1,6-bisphosphatase class 1 from Bordetella bronchiseptica (strain ATCC BAA-588 / NCTC 13252 / RB50) (Alcaligenes bronchisepticus).